A 304-amino-acid polypeptide reads, in one-letter code: Phosphate transport system permease protein PstA 1 (304 aa).

Helical transmembrane passes span 36–56 (FFFT…WVVI), 96–116 (AGVA…YLVE), 132–152 (VLAG…WIAT), 155–175 (FQQS…PVVV), 204–224 (IVRI…LLSI), and 276–296 (WGAA…AAMI). Residues 89–297 (LYGTLVQAGV…TINLAAAMIR (209 aa)) form the ABC transmembrane type-1 domain.

The protein belongs to the binding-protein-dependent transport system permease family. CysTW subfamily.

The protein localises to the cell membrane. Its function is as follows. Part of the binding-protein-dependent transport system for phosphate; probably responsible for the translocation of the substrate across the membrane. The protein is Phosphate transport system permease protein PstA 1 (pstA1) of Mycobacterium tuberculosis (strain CDC 1551 / Oshkosh).